The chain runs to 1072 residues: Carbamoyl phosphate synthase large chain (1072 aa).

The segment at 1 to 401 (MPKRLDINTI…SLLKAVRSLE (401 aa)) is carboxyphosphate synthetic domain. Residues R129, R169, G175, G176, K208, I210, E215, G241, V242, H243, Q284, and E298 each contribute to the ATP site. Residues 133–327 (RTLMQDLNEP…IAKLAAKIAV (195 aa)) enclose the ATP-grasp 1 domain. Residues Q284, E298, and N300 each coordinate Mg(2+). Mn(2+)-binding residues include Q284, E298, and N300. The oligomerization domain stretch occupies residues 402–546 (LGIYHLELDH…YSTYADENES (145 aa)). A carbamoyl phosphate synthetic domain region spans residues 547-929 (IVTDRKSVVV…ALYKGLVASG (383 aa)). One can recognise an ATP-grasp 2 domain in the interval 671 to 861 (EAALTKLGIP…MANVATKVIL (191 aa)). ATP contacts are provided by R707, R746, E752, G777, V778, H779, S780, Q820, and E832. Mg(2+)-binding residues include Q820, E832, and N834. The Mn(2+) site is built by Q820, E832, and N834. Positions 930-1072 (INIPTHGSVI…QTKRHEVVHA (143 aa)) constitute an MGS-like domain. Residues 930–1072 (INIPTHGSVI…QTKRHEVVHA (143 aa)) are allosteric domain.

It belongs to the CarB family. As to quaternary structure, composed of two chains; the small (or glutamine) chain promotes the hydrolysis of glutamine to ammonia, which is used by the large (or ammonia) chain to synthesize carbamoyl phosphate. Tetramer of heterodimers (alpha,beta)4. Requires Mg(2+) as cofactor. It depends on Mn(2+) as a cofactor.

The catalysed reaction is hydrogencarbonate + L-glutamine + 2 ATP + H2O = carbamoyl phosphate + L-glutamate + 2 ADP + phosphate + 2 H(+). The enzyme catalyses hydrogencarbonate + NH4(+) + 2 ATP = carbamoyl phosphate + 2 ADP + phosphate + 2 H(+). It participates in amino-acid biosynthesis; L-arginine biosynthesis; carbamoyl phosphate from bicarbonate: step 1/1. It functions in the pathway pyrimidine metabolism; UMP biosynthesis via de novo pathway; (S)-dihydroorotate from bicarbonate: step 1/3. Its function is as follows. Large subunit of the glutamine-dependent carbamoyl phosphate synthetase (CPSase). CPSase catalyzes the formation of carbamoyl phosphate from the ammonia moiety of glutamine, carbonate, and phosphate donated by ATP, constituting the first step of 2 biosynthetic pathways, one leading to arginine and/or urea and the other to pyrimidine nucleotides. The large subunit (synthetase) binds the substrates ammonia (free or transferred from glutamine from the small subunit), hydrogencarbonate and ATP and carries out an ATP-coupled ligase reaction, activating hydrogencarbonate by forming carboxy phosphate which reacts with ammonia to form carbamoyl phosphate. The sequence is that of Carbamoyl phosphate synthase large chain from Bacillus cereus (strain B4264).